The primary structure comprises 447 residues: Multidrug efflux pump SdrM (447 aa).

14 helical membrane-spanning segments follow: residues 6–26, 42–62, 70–90, 94–114, 134–154, 161–181, 194–214, 217–237, 260–280, 286–306, 323–342, 346–363, 392–412, and 418–438; these read IITVIALILIMFMSAIESSII, LISLIFTAYFIALVIANPIVG, IIYVAIAGLLLFSIGSFMCGL, FTMLIISRVIQGFGSGVLMSL, IVGSVWGISSIIGPLLGGGIL, WLFYINIPIAIIAIILVIWTF, FDTKGLTLFYVFIGLIMFALL, QLLLLNFLSFILAIVVAMCLF, VFITDLLTAICLMGFNLYIPV, LGLSPLQSGLVIFPLSVAWIT, IYLLSFTLLLVSSIIISFGI, VLIAFVLILAGLSFGYIY, LGASIGSTIMGYLYAIQSGIF, and NVLSAVAVISIGLIVLWVVFF.

Belongs to the major facilitator superfamily.

The protein localises to the cell membrane. Energy-dependent drug efflux pump that increases resistance to antimicrobial agents such as norfloxacin, acriflavine and ethidium bromide. The protein is Multidrug efflux pump SdrM of Staphylococcus aureus (strain N315).